The primary structure comprises 427 residues: Inorganic pyrophosphatase 1 (427 aa).

The segment covering 36 to 52 has biased composition (low complexity); it reads SSSSNTATTSTSSSNTS. 2 disordered regions span residues 36–63 and 77–118; these read SSSSNTATTSTSSSNTSQKWATSRTSRP and SMDS…RSLH. Composition is skewed to polar residues over residues 53-63 and 77-114; these read QKWATSRTSRP and SMDSGSSTVQLPSPRGSLTTAVSTSSSGAQRQMSANSE. Mg(2+)-binding residues include D259, D264, and D296.

This sequence belongs to the PPase family. Mg(2+) serves as cofactor. In terms of tissue distribution, expressed in coelomocytes, the intestine and in the nervous system including the nerve cords and sensory neurons.

Its subcellular location is the cytoplasm. The enzyme catalyses diphosphate + H2O = 2 phosphate + H(+). Functionally, catalyzes the hydrolysis of inorganic pyrophosphate (PPi) forming two phosphate ions. Plays a role in intestinal development and subsequent normal secretory, digestive and absorption functions. Required for larval development. This is Inorganic pyrophosphatase 1 from Caenorhabditis elegans.